The primary structure comprises 523 residues: Endoglucanase 19 (523 aa).

Positions 1 to 52 (MCSWSLSSHTLTSPVRQAAMEPKSSSCGGAGIRLRLLVVLHLLLLVPSSAMA) are cleaved as a signal peptide. Aspartate 107 (nucleophile) is an active-site residue. Asparagine 279 carries an N-linked (GlcNAc...) asparagine glycan. Catalysis depends on residues histidine 442, aspartate 493, and glutamate 502.

This sequence belongs to the glycosyl hydrolase 9 (cellulase E) family.

The protein resides in the secreted. It carries out the reaction Endohydrolysis of (1-&gt;4)-beta-D-glucosidic linkages in cellulose, lichenin and cereal beta-D-glucans.. This chain is Endoglucanase 19, found in Oryza sativa subsp. japonica (Rice).